Consider the following 141-residue polypeptide: Putative nickel-responsive regulator (141 aa).

Positions 83, 94, 96, and 102 each coordinate Ni(2+).

It belongs to the transcriptional regulatory CopG/NikR family. Ni(2+) serves as cofactor.

Transcriptional regulator. The chain is Putative nickel-responsive regulator from Methanopyrus kandleri (strain AV19 / DSM 6324 / JCM 9639 / NBRC 100938).